Consider the following 711-residue polypeptide: MKFFASCAKGLEYLLADELLALGASKATATISGVNVEGELRDAQRAVLWSRLASRVLWPLSEFDCPDEDALYAGVAELPWDAHLSVGHTLSVDAHVSGTAITHARYAAQRIKDAVVDTMRRQGLERPSVDVESPDLRLNLSLRKGRATISVDLGGGPLHRRGWRMAQNEAPLKENLAAAVLMRGGWPRAYADGGGLLDPMCGSGTLLIEGALMAADVAPGLQRYGSDLPSRWRGFDRNGWQQLVSEARERDSVGRAALKQVIHGSDMDPHAIRAAKENAQVAGVAEAIWFGVCEVGELQTPPQATGVVVCNPPYDERLAADAALYRRLGDTLQCAVPQWRASLLCGNAELAYATGLRAGKKYQLFNGAIECALIVCDPIAVPRRTPLAAPTALSEGAQMVANRLRKNLQKFKKWRAREGVECFRAYDADLPEYSAAIDVYQQADGDRRIFLHVQEYAAPATIPEADVRRRLNELLAAAREVFEVPAERVALKSRERGKGGSKYGRFEQRNEIVHVREHGALLRVNLFDYLDTGLFLDHRPLRGTMAQQSRGRRFLNLFCYTGVASVEAAVAGAASTTSVDLSGTYLQWCADNLALNGLAGSKHKLVQADALAWLEAERAHFDVIFCDPPTFSNSARAEDFDIQRAHVRLLRAAVARLAPGGVLYFSNNFRRFKLDEEGVAEFAQCEDISPSTIDPDFERHARIHRAWRLTA.

The THUMP domain maps to Asp42–Leu153.

Belongs to the methyltransferase superfamily. RlmKL family.

It is found in the cytoplasm. The catalysed reaction is guanosine(2445) in 23S rRNA + S-adenosyl-L-methionine = N(2)-methylguanosine(2445) in 23S rRNA + S-adenosyl-L-homocysteine + H(+). The enzyme catalyses guanosine(2069) in 23S rRNA + S-adenosyl-L-methionine = N(2)-methylguanosine(2069) in 23S rRNA + S-adenosyl-L-homocysteine + H(+). Specifically methylates the guanine in position 2445 (m2G2445) and the guanine in position 2069 (m7G2069) of 23S rRNA. In Xanthomonas oryzae pv. oryzae (strain KACC10331 / KXO85), this protein is Ribosomal RNA large subunit methyltransferase K/L.